We begin with the raw amino-acid sequence, 650 residues long: Protein ANTI-SILENCING 1 (650 aa).

The 132-residue stretch at 38–169 (DEYRLYDCVL…VGSCKVVDTI (132 aa)) folds into the BAH domain. Disordered stretches follow at residues 202–223 (NGKS…GSVR), 229–248 (AFES…EKEK), 257–359 (KSTL…QKLD), and 425–448 (VTEK…ADDN). Composition is skewed to basic and acidic residues over residues 259–270 (TLAEERSNKDSG) and 277–287 (NGKDQESEVKK). Positions 302–315 (SNSFEASGSRTIHS) are enriched in polar residues. Composition is skewed to basic and acidic residues over residues 348 to 358 (LDDRPLKKQKL) and 438 to 448 (RAEDKMSADDN). Positions 486 to 569 (TVVLLQNLDP…RPLVASFAKI (84 aa)) constitute an RRM domain.

As to quaternary structure, component of the ASI1-AIPP1-EDM2 (AAE) RNA regulatory complex composed of at least AIPP1/EDM3, ASI1 and EDM2 and may contain CPL2, AIPP2 and AIPP3/BDT1. Binds directly to AIPP1/EDM3 and AIPP2.

In terms of biological role, collaboratively with AIPP1/EDM3 and EDM2, the AAE complex regulates alternative RNA processing (e.g. alternative splicing) and epigenetic silencing (e.g. H3K9me2) of intronic heterochromatin-containing genes as well as genic heterochromatin-containing genes by promoting distal 3' polyadenylation; may associate with intronic heterochromatin and bind gene transcripts to modulate polyadenylation. Required to prevent promoter DNA hypermethylation and transcriptional silencing of some transgenes. Plays a similar role to that of the histone H3K9 demethylase JMJ25/IBM1 in preventing CHG methylation in the bodies of numerous genes. RNA-binding protein that ensures the proper expression of JMJ25/IBM1 full-length transcript by associating with an intronic heterochromatic repeat element of JMJ25/IBM1. Also modulates transposable elements (TE) expression. Contributes to a unique mechanism to deal with the collateral effect of silencing intronic repeat elements. The sequence is that of Protein ANTI-SILENCING 1 from Arabidopsis thaliana (Mouse-ear cress).